Reading from the N-terminus, the 249-residue chain is Aspartate/glutamate leucyltransferase (249 aa).

The protein belongs to the R-transferase family. Bpt subfamily.

It localises to the cytoplasm. It carries out the reaction N-terminal L-glutamyl-[protein] + L-leucyl-tRNA(Leu) = N-terminal L-leucyl-L-glutamyl-[protein] + tRNA(Leu) + H(+). The enzyme catalyses N-terminal L-aspartyl-[protein] + L-leucyl-tRNA(Leu) = N-terminal L-leucyl-L-aspartyl-[protein] + tRNA(Leu) + H(+). Functionally, functions in the N-end rule pathway of protein degradation where it conjugates Leu from its aminoacyl-tRNA to the N-termini of proteins containing an N-terminal aspartate or glutamate. This chain is Aspartate/glutamate leucyltransferase, found in Brucella suis (strain ATCC 23445 / NCTC 10510).